The following is a 512-amino-acid chain: Eukaryotic translation initiation factor 3 subunit L (512 aa).

Positions 291–477 (DAFRLFESIL…GERQFTDSVD (187 aa)) constitute a PCI domain.

The protein belongs to the eIF-3 subunit L family. In terms of assembly, component of the eukaryotic translation initiation factor 3 (eIF-3) complex.

Its subcellular location is the cytoplasm. Its function is as follows. Component of the eukaryotic translation initiation factor 3 (eIF-3) complex, which is involved in protein synthesis of a specialized repertoire of mRNAs and, together with other initiation factors, stimulates binding of mRNA and methionyl-tRNAi to the 40S ribosome. The eIF-3 complex specifically targets and initiates translation of a subset of mRNAs involved in cell proliferation. This is Eukaryotic translation initiation factor 3 subunit L from Monosiga brevicollis (Choanoflagellate).